The chain runs to 286 residues: Putative WUSCHEL-related homeobox 2 (286 aa).

Disordered stretches follow at residues 1 to 25 (MAPAVQQQQSGGGGGSTGAAAVGST) and 128 to 152 (SSSSSCGGGLNEDANSLLSPTSPTT). Residues 23–87 (GSTTRWCPTP…NHKARDRQKL (65 aa)) constitute a DNA-binding region (homeobox; WUS-type).

This sequence belongs to the WUS homeobox family.

The protein resides in the nucleus. Its function is as follows. Transcription factor which may be involved in developmental processes. In Oryza sativa subsp. indica (Rice), this protein is Putative WUSCHEL-related homeobox 2 (WOX2).